The sequence spans 731 residues: Ubiquitin carboxyl-terminal hydrolase 17 (731 aa).

Positions 57, 60, 68, 71, 77, 81, 90, and 94 each coordinate Zn(2+). Residues 57–94 (CAVCLYPTTTRCSQCKSVRYCSSKCQILHWRRGHKEEC) form an MYND-type zinc finger. Disordered regions lie at residues 171–219 (YETR…DSAN) and 262–281 (LPSK…SGLK). Polar residues-rich tracts occupy residues 207-219 (GNQN…DSAN) and 265-281 (KANS…SGLK). The 305-residue stretch at 329-633 (FGLVNLGNSC…GAYMLLYARD (305 aa)) folds into the USP domain. Catalysis depends on Cys338, which acts as the Nucleophile. His592 functions as the Proton acceptor in the catalytic mechanism. The disordered stretch occupies residues 637 to 702 (PVSKNGGRKS…TSSCSTKDSS (66 aa)). A compositionally biased stretch (low complexity) spans 677-701 (DWSSGSLSSMFSSSDTTSSCSTKDS).

Belongs to the peptidase C19 family.

It carries out the reaction Thiol-dependent hydrolysis of ester, thioester, amide, peptide and isopeptide bonds formed by the C-terminal Gly of ubiquitin (a 76-residue protein attached to proteins as an intracellular targeting signal).. Functionally, recognizes and hydrolyzes the peptide bond at the C-terminal Gly of ubiquitin. Involved in the processing of poly-ubiquitin precursors as well as that of ubiquitinated proteins. In Arabidopsis thaliana (Mouse-ear cress), this protein is Ubiquitin carboxyl-terminal hydrolase 17 (UBP17).